We begin with the raw amino-acid sequence, 118 residues long: Phosphoribosyl-AMP cyclohydrolase (118 aa).

Aspartate 87 is a Mg(2+) binding site. Cysteine 88 lines the Zn(2+) pocket. Residues aspartate 89 and aspartate 91 each coordinate Mg(2+). Zn(2+)-binding residues include cysteine 104 and cysteine 111.

It belongs to the PRA-CH family. As to quaternary structure, homodimer. Mg(2+) is required as a cofactor. The cofactor is Zn(2+).

The protein localises to the cytoplasm. The catalysed reaction is 1-(5-phospho-beta-D-ribosyl)-5'-AMP + H2O = 1-(5-phospho-beta-D-ribosyl)-5-[(5-phospho-beta-D-ribosylamino)methylideneamino]imidazole-4-carboxamide. The protein operates within amino-acid biosynthesis; L-histidine biosynthesis; L-histidine from 5-phospho-alpha-D-ribose 1-diphosphate: step 3/9. Its function is as follows. Catalyzes the hydrolysis of the adenine ring of phosphoribosyl-AMP. This is Phosphoribosyl-AMP cyclohydrolase from Corynebacterium glutamicum (strain ATCC 13032 / DSM 20300 / JCM 1318 / BCRC 11384 / CCUG 27702 / LMG 3730 / NBRC 12168 / NCIMB 10025 / NRRL B-2784 / 534).